Reading from the N-terminus, the 436-residue chain is MIVPDLFVAHFREAAPYIRQMRGKTLVAGIDDRLLEGDTLNKFAADIGLLSQLGIRLVLIHGARHFLDRHAAAQGRTPHYCRGLRVTDETSLEQAQQFAGTVRSRFEAALCGSVSGFARAPSVPLVSGNFLTARPIGVIDGTDMEYAGVIRKTDTAALRFQLDAGNIVWLPPLGHSYSGKTFHLDMLQTAASVAVSLQAEKLVYLTLSDGISRPDGTLAVTLSAQEAQSLAEHAGGETRRLISSAVAALEGGVHRVQILNGAADGSLLQELFTRNGIGTSIAKEAFVSIRQAHSGDIPHIAALIRPLEEQGILLHRSREYLENHISEFSILEHDGNLYGCAALKTFAEADCGEIACLAVSPQAQDGGYGERLLAHIIDKARGIGISRLFALSTNTGEWFAERGFQTASEDELPETRRKDYRSNGRNSHILVRRLHR.

The N-acetyltransferase domain maps to 287–436; sequence VSIRQAHSGD…SHILVRRLHR (150 aa).

This sequence belongs to the acetyltransferase family. ArgA subfamily.

Its subcellular location is the cytoplasm. It catalyses the reaction L-glutamate + acetyl-CoA = N-acetyl-L-glutamate + CoA + H(+). Its pathway is amino-acid biosynthesis; L-arginine biosynthesis; N(2)-acetyl-L-ornithine from L-glutamate: step 1/4. This Neisseria meningitidis serogroup A / serotype 4A (strain DSM 15465 / Z2491) protein is Amino-acid acetyltransferase (argA).